A 348-amino-acid chain; its full sequence is GMP reductase 2 (348 aa).

NADP(+) is bound by residues 26-27, Lys78, 129-131, and 180-181; these read SR, DVA, and IG. K(+)-binding residues include Gly181, Gly183, and Cys186. The active-site Thioimidate intermediate is Cys186. Residue Thr188 is the Proton donor/acceptor of the active site. Arg189 serves as a coordination point for K(+). GMP-binding positions include 219-221, 242-243, 268-270, and 286-290; these read DGG, GG, GMS, and RASEG. Residues Met269 and 285–286 contribute to the NADP(+) site; that span reads YR. Position 291 is an N6-acetyllysine (Lys291). 314–317 contributes to the NADP(+) binding site; it reads STCT.

This sequence belongs to the IMPDH/GMPR family. GuaC type 1 subfamily. In terms of assembly, homotetramer.

The catalysed reaction is IMP + NH4(+) + NADP(+) = GMP + NADPH + 2 H(+). Functionally, catalyzes the irreversible NADPH-dependent deamination of GMP to IMP. It functions in the conversion of nucleobase, nucleoside and nucleotide derivatives of G to A nucleotides, and in maintaining the intracellular balance of A and G nucleotides. Plays a role in modulating cellular differentiation. The protein is GMP reductase 2 of Bos taurus (Bovine).